Reading from the N-terminus, the 283-residue chain is PTS system mannose-specific EIID component (283 aa).

Residue Met1 is modified to N-formylmethionine. The Cytoplasmic segment spans residues 1-14 (MVDTTQTTTEKKLT). The region spanning 11–281 (KKLTQSDIRG…GIAGYACGLL (271 aa)) is the PTS EIID domain. An intramembrane segment occupies 15–52 (QSDIRGVFLRSNLFQGSWNFERMQALGFCFSMVPAIRR). Residues 53 to 59 (LYPENNE) lie on the Cytoplasmic side of the membrane. An intramembrane segment occupies 60 to 92 (ARKQAIRRHLEFFNTQPFVAAPILGVTLALEEQ). Topologically, residues 93 to 100 (RANGAEID) are cytoplasmic. The hydrophobic stretch at 101-140 (DGAINGIKVGLMGPLAGVGDPIFWGTVRPVFAALGAGIAM) threads the membrane. At 141–144 (SGSL) the chain is on the periplasmic side. The segment at 145–173 (LGPLLFFILFNLVRLATRYYGVAYGYSKG) is a transmembrane helix. The Cytoplasmic segment spans residues 174-183 (IDIVKDMGGG). Residues 184–209 (FLQKLTEGASILGLFVMGALVNKWTH) are membrane-embedded. Residues 210–241 (VNIPLVVSRITDQTGKEHVTTVQTILDQLMPG) are Periplasmic-facing. The segment at 242–255 (LVPLLLTFACMWLL) is a transmembrane helix. Residues 256 to 261 (RKKVNP) are Cytoplasmic-facing. Residues 262 to 280 (LWIIVGFFVIGIAGYACGL) are membrane-embedded. Residues 281–283 (LGL) lie on the Periplasmic side of the membrane.

As to quaternary structure, homotrimer of protomers that are composed of two subunits, IIC and IID.

It is found in the cell inner membrane. Functionally, the phosphoenolpyruvate-dependent sugar phosphotransferase system (sugar PTS), a major carbohydrate active transport system, catalyzes the phosphorylation of incoming sugar substrates concomitantly with their translocation across the cell membrane. The enzyme II ManXYZ PTS system is involved in mannose transport. The sequence is that of PTS system mannose-specific EIID component (manZ) from Escherichia coli O157:H7.